Reading from the N-terminus, the 229-residue chain is Clathrin light chain B (229 aa).

Composition is skewed to low complexity over residues 1–17 and 45–58; these read MAED…GAPE and GAPA…AQPG. Positions 1-80 are disordered; sequence MAEDFGFFSS…TVNGDVFQEA (80 aa). Phosphoserine occurs at positions 11 and 13. Positions 93 to 155 are involved in binding clathrin heavy chain; it reads ADRLTQEPES…QVEKNKINNR (63 aa). Thr187 carries the phosphothreonine modification. Cys199 and Cys209 are disulfide-bonded. Lys204 carries the post-translational modification N6-acetyllysine. Ser217 is subject to Phosphoserine.

Belongs to the clathrin light chain family. As to quaternary structure, clathrin coats are formed from molecules containing 3 heavy chains and 3 light chains. Interacts (via N-terminus) with HIP1. Interacts with HIP1R.

The protein localises to the cytoplasmic vesicle membrane. It localises to the membrane. It is found in the coated pit. Functionally, clathrin is the major protein of the polyhedral coat of coated pits and vesicles. The protein is Clathrin light chain B (Cltb) of Rattus norvegicus (Rat).